The following is a 336-amino-acid chain: Retinol dehydrogenase 14 (336 aa).

Thr-5 carries the post-translational modification Phosphothreonine. Residue 50 to 56 (GANSGLG) participates in NADP(+) binding. Ser-192 contributes to the substrate binding site. The Proton acceptor role is filled by Tyr-217.

It belongs to the short-chain dehydrogenases/reductases (SDR) family. Widely expressed.

The catalysed reaction is all-trans-retinol + NADP(+) = all-trans-retinal + NADPH + H(+). It catalyses the reaction 9-cis-retinol + NADP(+) = 9-cis-retinal + NADPH + H(+). It carries out the reaction 11-cis-retinol + NADP(+) = 11-cis-retinal + NADPH + H(+). It participates in cofactor metabolism; retinol metabolism. Functionally, retinol dehydrogenase with a clear preference for NADP. Displays high activity towards 9-cis, 11-cis and all-trans-retinol. Shows a very weak activity towards 13-cis-retinol. Has no activity towards steroid. In Homo sapiens (Human), this protein is Retinol dehydrogenase 14 (RDH14).